The sequence spans 245 residues: tRNA1(Val) (adenine(37)-N6)-methyltransferase (245 aa).

Belongs to the methyltransferase superfamily. tRNA (adenine-N(6)-)-methyltransferase family.

It localises to the cytoplasm. The catalysed reaction is adenosine(37) in tRNA1(Val) + S-adenosyl-L-methionine = N(6)-methyladenosine(37) in tRNA1(Val) + S-adenosyl-L-homocysteine + H(+). Its function is as follows. Specifically methylates the adenine in position 37 of tRNA(1)(Val) (anticodon cmo5UAC). The protein is tRNA1(Val) (adenine(37)-N6)-methyltransferase of Salmonella paratyphi A (strain ATCC 9150 / SARB42).